Here is a 564-residue protein sequence, read N- to C-terminus: Urocanate hydratase (564 aa).

NAD(+) contacts are provided by residues 58–59 (GG), Q136, 182–184 (GMG), E202, R207, 248–249 (NA), 269–273 (QTSAH), 279–280 (YL), and Y328. The active site involves C416. G498 provides a ligand contact to NAD(+).

It belongs to the urocanase family. It depends on NAD(+) as a cofactor.

Its subcellular location is the cytoplasm. The enzyme catalyses 4-imidazolone-5-propanoate = trans-urocanate + H2O. It participates in amino-acid degradation; L-histidine degradation into L-glutamate; N-formimidoyl-L-glutamate from L-histidine: step 2/3. Catalyzes the conversion of urocanate to 4-imidazolone-5-propionate. This Aliivibrio salmonicida (strain LFI1238) (Vibrio salmonicida (strain LFI1238)) protein is Urocanate hydratase.